The following is a 174-amino-acid chain: Regulator of G-protein signaling 8 (174 aa).

In terms of domain architecture, RGS spans 46–162; the sequence is SFDILLSNKY…IRSKIYQDLL (117 aa).

The protein resides in the cell membrane. Its subcellular location is the membrane. It is found in the perikaryon. The protein localises to the cell projection. It localises to the dendrite. The protein resides in the nucleus. Functionally, regulates G protein-coupled receptor signaling cascades, including signaling via muscarinic acetylcholine receptors and dopamine receptors. Inhibits signal transduction by increasing the GTPase activity of G protein alpha subunits, thereby driving them into their inactive GDP-bound form. Modulates the activity of potassium channels that are activated in response to G protein-coupled receptor signaling. The protein is Regulator of G-protein signaling 8 (rgs8) of Danio rerio (Zebrafish).